Reading from the N-terminus, the 444-residue chain is GTPase Der (444 aa).

EngA-type G domains follow at residues 2-167 and 173-349; these read LKVA…LKEI and FKFC…ENLN. GTP-binding positions include 8-15, 55-59, 118-121, 179-186, 226-230, and 291-294; these read GKPNVGKS, DTGGL, NKSE, GRPNVGKS, DTAGI, and NKWD. A KH-like domain is found at 350–434; sequence LKFNSKILTD…PITLYFKNKT (85 aa).

The protein belongs to the TRAFAC class TrmE-Era-EngA-EngB-Septin-like GTPase superfamily. EngA (Der) GTPase family. As to quaternary structure, associates with the 50S ribosomal subunit.

In terms of biological role, GTPase that plays an essential role in the late steps of ribosome biogenesis. In Malacoplasma penetrans (strain HF-2) (Mycoplasma penetrans), this protein is GTPase Der.